A 2581-amino-acid polypeptide reads, in one-letter code: Chromodomain-helicase-DNA-binding protein 8 (2581 aa).

Disordered stretches follow at residues 22 to 114 (DDSF…QTST), 253 to 283 (VKGS…TQGE), 349 to 392 (QKIQ…SPGQ), 429 to 582 (ALSS…QVKR), and 596 to 615 (DEEE…PILP). 2 stretches are compositionally biased toward polar residues: residues 42–51 (SLDSLDQMNQ) and 94–114 (DYTT…QTST). Positions 255–267 (GSAPAGNPGATGP) are enriched in low complexity. A compositionally biased stretch (pro residues) spans 355–370 (PQPPSSQPQPQQPPST). Ser-432 is subject to Phosphoserine. Composition is skewed to basic and acidic residues over residues 445–462 (GMEE…EKAN) and 493–516 (RPEE…EEKP). Ser-553 and Ser-562 each carry phosphoserine. Over residues 572-582 (QKRRSNRQVKR) the composition is skewed to basic residues. Lys-609 participates in a covalent cross-link: Glycyl lysine isopeptide (Lys-Gly) (interchain with G-Cter in SUMO). Chromo domains lie at 642–709 (AIVD…AQMR) and 724–790 (VEVD…RVNR). The Helicase ATP-binding domain occupies 823-997 (LFNWYNRQNC…FSLLHFLEPS (175 aa)). An ATP-binding site is contributed by 836 to 843 (DEMGLGKT). Residues 948–951 (DEAH) carry the DEAH box motif. A Helicase C-terminal domain is found at 1137–1288 (LIDKLLPKLK…KAVLQSMSGR (152 aa)). Phosphoserine is present on residues Ser-1420 and Ser-1424. A disordered region spans residues 1692-1712 (EDPEYKPLQGPPKDQDDEGDP). Residues 1789–2302 (IARREKQQRW…LVELEVECME (514 aa)) form an interaction with FAM124B region. Ser-1976 and Ser-1978 each carry phosphoserine. Positions 1991–2116 (SRTASPLPLR…TDQSRSKLYD (126 aa)) are disordered. Thr-1993 carries the phosphothreonine modification. A phosphoserine mark is found at Ser-1995 and Ser-2008. Residues 2011–2021 (ETATQVPSLES) are compositionally biased toward polar residues. Lys-2025 participates in a covalent cross-link: Glycyl lysine isopeptide (Lys-Gly) (interchain with G-Cter in SUMO2). Ser-2046 is modified (phosphoserine). Position 2051 is a phosphothreonine (Thr-2051). Residues 2064 to 2073 (EDEDDSDSEL) show a composition bias toward acidic residues. Ser-2069 and Ser-2071 each carry phosphoserine. The span at 2076 to 2095 (SKLSPSSSSSSSSSSSSSST) shows a compositional bias: low complexity. Basic and acidic residues predominate over residues 2103–2116 (EEKLTDQSRSKLYD). 3 positions are modified to phosphoserine: Ser-2182, Ser-2200, and Ser-2202. The tract at residues 2189–2229 (GILGPGNHLLDSPSLTPGEYGDSPVPTPRSSSAASMAEEEA) is disordered. Thr-2204 bears the Phosphothreonine mark. Ser-2211 is subject to Phosphoserine. At Thr-2215 the chain carries Phosphothreonine. Positions 2218 to 2229 (SSSAASMAEEEA) are enriched in low complexity. Residue Ser-2223 is modified to Phosphoserine. A Glycyl lysine isopeptide (Lys-Gly) (interchain with G-Cter in SUMO2) cross-link involves residue Lys-2256. Residues 2481 to 2581 (PSSPHVDSST…NSDSSEDADD (101 aa)) form a disordered region. Residues 2492–2510 (LHHHHHHPHPHHHHHHHPG) are compositionally biased toward basic residues. Ser-2519 is modified (phosphoserine). Residues 2519–2528 (SPVTTASGTT) show a composition bias toward polar residues. Residues 2536-2550 (PEEDDDEDEEDDDDL) are compositionally biased toward acidic residues.

It belongs to the SNF2/RAD54 helicase family. CHD8 subfamily. Interacts with p53/TP53, histone H1, CTNNB1, CTCF and PIAS3. Component of some MLL1/MLL complex, at least composed of the core components KMT2A/MLL1, ASH2L, HCFC1/HCF1, WDR5 and RBBP5, as well as the facultative components BACC1, CHD8, E2F6, HSP70, INO80C, KANSL1, LAS1L, MAX, MCRS1, MGA, KAT8/MOF, PELP1, PHF20, PRP31, RING2, RUVB1/TIP49A, RUVB2/TIP49B, SENP3, TAF1, TAF4, TAF6, TAF7, TAF9 and TEX10. Interacts with CHD7. Interacts with FAM124B. Interacts with TLK2. Interacts with HNRNPL in an RNA-dependent manner. Sumoylated.

The protein resides in the nucleus. It catalyses the reaction ATP + H2O = ADP + phosphate + H(+). Its function is as follows. ATP-dependent chromatin-remodeling factor, it slides nucleosomes along DNA; nucleosome sliding requires ATP. Acts as a transcription repressor by remodeling chromatin structure and recruiting histone H1 to target genes. Suppresses p53/TP53-mediated apoptosis by recruiting histone H1 and preventing p53/TP53 transactivation activity. Acts as a negative regulator of Wnt signaling pathway by regulating beta-catenin (CTNNB1) activity. Negatively regulates CTNNB1-targeted gene expression by being recruited specifically to the promoter regions of several CTNNB1 responsive genes. Involved in both enhancer blocking and epigenetic remodeling at chromatin boundary via its interaction with CTCF. Acts as a suppressor of STAT3 activity by suppressing the LIF-induced STAT3 transcriptional activity. Also acts as a transcription activator via its interaction with ZNF143 by participating in efficient U6 RNA polymerase III transcription. Regulates alternative splicing of a core group of genes involved in neuronal differentiation, cell cycle and DNA repair. Enables H3K36me3-coupled transcription elongation and co-transcriptional RNA processing likely via interaction with HNRNPL. This Homo sapiens (Human) protein is Chromodomain-helicase-DNA-binding protein 8.